Reading from the N-terminus, the 212-residue chain is External core antigen (212 aa).

The signal sequence occupies residues 1–19 (MQLFHLCLIISCSCPTVQA). The tract at residues 25–27 (GWL) is HBEAG. The tract at residues 172–212 (LPETTVVRRRGRSPRRRTPSPRRRRSKSPRRRRSQSRESQC) is disordered. Over residues 178-205 (VRRRGRSPRRRTPSPRRRRSKSPRRRRS) the composition is skewed to basic residues. A 1; half-length repeat occupies 184 to 189 (SPRRRT). Residues 184 to 205 (SPRRRTPSPRRRRSKSPRRRRS) form a 3 X 7 AA repeats of S-P-R-R-R-R-S region. The propeptide occupies 184-212 (SPRRRTPSPRRRRSKSPRRRRSQSRESQC). 2 consecutive repeat copies span residues 191 to 197 (SPRRRRS) and 199 to 205 (SPRRRRS).

Belongs to the orthohepadnavirus precore antigen family. Homodimerizes. In terms of processing, phosphorylated. Cleaved by host furin.

It localises to the secreted. Its subcellular location is the host nucleus. Its function is as follows. May regulate immune response to the intracellular capsid in acting as a T-cell tolerogen, by having an immunoregulatory effect which prevents destruction of infected cells by cytotoxic T-cells. This immune regulation may predispose to chronicity during perinatal infections and prevent severe liver injury during adult infections. In Hepatitis B virus genotype C subtype adr (isolate Japan/Nishioka/1983) (HBV-C), this protein is External core antigen.